The chain runs to 123 residues: Small ribosomal subunit protein uS12c (123 aa).

The tract at residues 103 to 123 (AAGVKNRKQSRSKYGAKKPKE) is disordered. Residues 107-123 (KNRKQSRSKYGAKKPKE) show a composition bias toward basic residues.

It belongs to the universal ribosomal protein uS12 family. In terms of assembly, part of the 30S ribosomal subunit.

It is found in the plastid. The protein resides in the chloroplast. With S4 and S5 plays an important role in translational accuracy. Located at the interface of the 30S and 50S subunits. The chain is Small ribosomal subunit protein uS12c (rps12) from Guillardia theta (Cryptophyte).